The following is a 633-amino-acid chain: Ankyrin repeat and SOCS box protein 2 (633 aa).

A UIM domain is found at 26–45 (SEDELVQMAIEQSLADKTRG). 12 ANK repeats span residues 102 to 131 (APVD…NLSE), 135 to 165 (EGWL…VIDQ), 169 to 198 (QEET…EPDI), 202 to 231 (SRET…DTNH), 235 to 264 (RGWT…KVEA), 268 to 297 (YGIT…DINT), 301 to 330 (DSAS…DANK), 334 to 363 (DGML…RTRV), 366 to 395 (SGIS…DVNA), 408 to 437 (RRSS…DPNR), 438 to 467 (DVIN…NIDA), and 474 to 502 (TAFP…NGEP). Residue serine 369 is modified to Phosphoserine. The SOCS box domain maps to 579–633 (EDWAVIKEKAEPPRPLAHLCRLRVRKAIGKYRIKLLDTLPLPGRLIRYLKYENTQ).

It belongs to the ankyrin SOCS box (ASB) family. Component of a probable ECS E3 ubiquitin-protein ligase complex which contains CUL5, either RBX1 or RNF7/RBX2, Elongin BC complex (ELOB and ELOC) and ASB2. Interacts with SKP2. Through its interaction with SKP2, likely to bridge the formation of dimeric E3-ubiquitin-protein ligase complexes composed of an ECS complex and an SCF(SKP2) complex. Interacts with JAK2; the interaction targets JAK2 for Notch-mediated proteasomal degradation. Interacts with TCF3/E2A; the interaction is mediated by SKP2 and targets TCF3 for Notch-mediated proteasomal degradation. Interacts with DES. In terms of processing, monoubiquitinated.

It localises to the cytoplasm. The protein localises to the cytoskeleton. Its subcellular location is the stress fiber. The protein resides in the myofibril. It is found in the sarcomere. It localises to the z line. It participates in protein modification; protein ubiquitination. Substrate-recognition component of a SCF-like ECS (Elongin-Cullin-SOCS-box protein) E3 ubiquitin-protein ligase complex which mediates the ubiquitination and subsequent proteasomal degradation of target proteins. Mediates Notch-induced ubiquitination and degradation of substrates including E2A and JAK2. Required during embryonic heart development for complete heart looping. Required for cardiomyocyte differentiation. Involved in myogenic differentiation and targets filamin FLNB for proteasomal degradation but not filamin FLNA. Also targets DES for proteasomal degradation. Acts as a negative regulator of skeletal muscle mass. This Bos taurus (Bovine) protein is Ankyrin repeat and SOCS box protein 2.